The primary structure comprises 299 residues: Methionyl-tRNA formyltransferase (299 aa).

S109–P112 lines the (6S)-5,6,7,8-tetrahydrofolate pocket.

The protein belongs to the Fmt family.

The catalysed reaction is L-methionyl-tRNA(fMet) + (6R)-10-formyltetrahydrofolate = N-formyl-L-methionyl-tRNA(fMet) + (6S)-5,6,7,8-tetrahydrofolate + H(+). Its function is as follows. Attaches a formyl group to the free amino group of methionyl-tRNA(fMet). The formyl group appears to play a dual role in the initiator identity of N-formylmethionyl-tRNA by promoting its recognition by IF2 and preventing the misappropriation of this tRNA by the elongation apparatus. In Wolbachia pipientis subsp. Culex pipiens (strain wPip), this protein is Methionyl-tRNA formyltransferase.